The following is a 311-amino-acid chain: Porphobilinogen deaminase (311 aa).

At C242 the chain carries S-(dipyrrolylmethanemethyl)cysteine.

Belongs to the HMBS family. In terms of assembly, monomer. It depends on dipyrromethane as a cofactor.

It carries out the reaction 4 porphobilinogen + H2O = hydroxymethylbilane + 4 NH4(+). It participates in porphyrin-containing compound metabolism; protoporphyrin-IX biosynthesis; coproporphyrinogen-III from 5-aminolevulinate: step 2/4. Functionally, tetrapolymerization of the monopyrrole PBG into the hydroxymethylbilane pre-uroporphyrinogen in several discrete steps. The polypeptide is Porphobilinogen deaminase (Baumannia cicadellinicola subsp. Homalodisca coagulata).